The following is a 445-amino-acid chain: UPF0210 protein Ccon26_06850 (445 aa).

This sequence belongs to the UPF0210 family. In terms of assembly, homodimer.

In Campylobacter concisus (strain 13826), this protein is UPF0210 protein Ccon26_06850.